The chain runs to 218 residues: External core antigen (218 aa).

Residues 1 to 19 (MYLFHLCLVFACVPCPTFQ) form the signal peptide. The interval 26–28 (GWL) is HBEAG. Residues 180 to 211 (RRRGGARASRSPRRRTPSPRRRRSQSPRRRRS) are compositionally biased toward basic residues. The tract at residues 180–218 (RRRGGARASRSPRRRTPSPRRRRSQSPRRRRSQSPSANC) is disordered. The 1; half-length repeat unit spans residues 190-196 (SPRRRTP). The segment at 190 to 212 (SPRRRTPSPRRRRSQSPRRRRSQ) is 3 X 8 AA repeats of S-P-R-R-R-R-S-Q. Positions 190-218 (SPRRRTPSPRRRRSQSPRRRRSQSPSANC) are excised as a propeptide. Repeat copies occupy residues 197-204 (SPRRRRSQ) and 205-212 (SPRRRRSQ).

Belongs to the orthohepadnavirus precore antigen family. In terms of assembly, homodimerizes. Post-translationally, phosphorylated. In terms of processing, cleaved by host furin.

The protein resides in the secreted. Its subcellular location is the host nucleus. Its function is as follows. May regulate immune response to the intracellular capsid in acting as a T-cell tolerogen, by having an immunoregulatory effect which prevents destruction of infected cells by cytotoxic T-cells. This immune regulation may predispose to chronicity during perinatal infections and prevent severe liver injury during adult infections. This Marmota monax (Woodchuck) protein is External core antigen.